The primary structure comprises 458 residues: Vacuolar basic amino acid transporter 3 (458 aa).

Residues 1 to 9 (MNMLIVGRV) are Cytoplasmic-facing. The helical transmembrane segment at 10 to 30 (VASVGGSGLQTLCFVIGCTMV) threads the bilayer. At 31–36 (GERSRP) the chain is on the vacuolar side. A helical transmembrane segment spans residues 37-57 (LVISILSCAFAVAAIVGPIIG). Over 58 to 67 (GAFTTHVTWR) the chain is Cytoplasmic. The chain crosses the membrane as a helical span at residues 68–88 (WCFYINLPIGGLAIIMFLLTY). Residues 89–132 (KAENKGILQQIKDAIGTISSFTFSKFRHQVNFKRLMNGIIFKFD) are Vacuolar-facing. The helical transmembrane segment at 133–153 (FFGFALCSAGLVLFLLGLTFG) threads the bilayer. Over 154-163 (GNKYSWNSGQ) the chain is Cytoplasmic. A helical membrane pass occupies residues 164 to 184 (VIAYLVLGVLLFIFSLVYDFF). Residues 185–205 (LFDKFNPEPDNISYRPLLLRR) lie on the Vacuolar side of the membrane. A glycan (N-linked (GlcNAc...) asparagine) is linked at Asn195. Residues 206–226 (LVAKPAIIIINMVTFLLCTGY) form a helical membrane-spanning segment. At 227 to 248 (NGQMIYSVQFFQLIFASSAWKA) the chain is on the cytoplasmic side. Residues 249-269 (GLHLIPIVITNVIAAIASGVI) traverse the membrane as a helical segment. The Vacuolar portion of the chain corresponds to 270–277 (TKKLGLVK). The helical transmembrane segment at 278 to 298 (PLLIFGGVLGVIGAGLMTLMT) threads the bilayer. At 299–306 (NTSTKSTQ) the chain is on the cytoplasmic side. Residues 307-327 (IGVLLLPGFSLGFALQASLMS) form a helical membrane-spanning segment. Residues 328 to 415 (AQLQITKDRP…STIGNILSDS (88 aa)) lie on the Vacuolar side of the membrane. The chain crosses the membrane as a helical span at residues 416 to 436 (IKNVFWMDLGFYALGFLFCSF). At 437-458 (SSNKKLIIPKKDETPEDNLEDK) the chain is on the cytoplasmic side.

This sequence belongs to the major facilitator superfamily.

The protein resides in the vacuole membrane. Its function is as follows. Transporter required for vacuolar uptake of histidine and lysine. The protein is Vacuolar basic amino acid transporter 3 (VBA3) of Saccharomyces cerevisiae (strain ATCC 204508 / S288c) (Baker's yeast).